Here is a 285-residue protein sequence, read N- to C-terminus: Chromatin modification-related protein YNG2 (285 aa).

Disordered stretches follow at residues 1 to 24 (MSFE…SNLK) and 155 to 201 (RTVA…GANF). A compositionally biased stretch (polar residues) spans 8–24 (DPSSALEQATQDVSNLK). Residues 10-36 (SSALEQATQDVSNLKSESRFLLEEIRA) adopt a coiled-coil conformation. The PHD-type zinc finger occupies 224–273 (QLYCFCQSVSYGEMVACDGPNCKYEWFHYGCVNLDEPPKGQWYCPECRQE). Zn(2+) is bound by residues cysteine 227, cysteine 229, cysteine 240, cysteine 245, histidine 251, cysteine 254, cysteine 267, and cysteine 270.

The protein belongs to the ING family. As to quaternary structure, interacts with H3K4me3 and to a lesser extent with H3K4me2. Component of the NuA4 histone acetyltransferase complex.

The protein resides in the nucleus. Component of the NuA4 histone acetyltransferase complex which is involved in transcriptional activation of selected genes principally by acetylation of nucleosomal histone H4 and H2A. The NuA4 complex is also involved in DNA repair. Involved in cell cycle progression and meiosis. This is Chromatin modification-related protein YNG2 (YNG2) from Eremothecium gossypii (strain ATCC 10895 / CBS 109.51 / FGSC 9923 / NRRL Y-1056) (Yeast).